A 365-amino-acid polypeptide reads, in one-letter code: tRNA 2-selenouridine synthase (365 aa).

Residues 12–136 (FLHDVPLLDV…LRMFLIDTTQ (125 aa)) form the Rhodanese domain. The active-site S-selanylcysteine intermediate is Cys95.

It belongs to the SelU family. Monomer.

It catalyses the reaction 5-methylaminomethyl-2-thiouridine(34) in tRNA + selenophosphate + (2E)-geranyl diphosphate + H2O + H(+) = 5-methylaminomethyl-2-selenouridine(34) in tRNA + (2E)-thiogeraniol + phosphate + diphosphate. The enzyme catalyses 5-methylaminomethyl-2-thiouridine(34) in tRNA + (2E)-geranyl diphosphate = 5-methylaminomethyl-S-(2E)-geranyl-thiouridine(34) in tRNA + diphosphate. The catalysed reaction is 5-methylaminomethyl-S-(2E)-geranyl-thiouridine(34) in tRNA + selenophosphate + H(+) = 5-methylaminomethyl-2-(Se-phospho)selenouridine(34) in tRNA + (2E)-thiogeraniol. It carries out the reaction 5-methylaminomethyl-2-(Se-phospho)selenouridine(34) in tRNA + H2O = 5-methylaminomethyl-2-selenouridine(34) in tRNA + phosphate. In terms of biological role, involved in the post-transcriptional modification of the uridine at the wobble position (U34) of tRNA(Lys), tRNA(Glu) and tRNA(Gln). Catalyzes the conversion of 2-thiouridine (S2U-RNA) to 2-selenouridine (Se2U-RNA). Acts in a two-step process involving geranylation of 2-thiouridine (S2U) to S-geranyl-2-thiouridine (geS2U) and subsequent selenation of the latter derivative to 2-selenouridine (Se2U) in the tRNA chain. This Verminephrobacter eiseniae (strain EF01-2) protein is tRNA 2-selenouridine synthase.